The primary structure comprises 783 residues: Protein involved in starch initiation 1 (783 aa).

The N-terminal 27 residues, 1–27, are a transit peptide targeting the chloroplast; the sequence is MGFSQAIRLNLASFSSPSPCDYCLTRV. 3 coiled-coil regions span residues 128-309, 345-432, and 457-512; these read LHDA…LKEE, LVFS…LELA, and LQEK…LKAL.

In terms of assembly, interacts with PTST2; the interaction is essential for the initiation of starch granules biosynthesis in leaf chloroplasts. Interacts with SS4; the interaction is essential for the initiation of starch granules biosynthesis in leaf chloroplasts.

It is found in the plastid. The protein localises to the chloroplast. Required for the initiation of starch granules biosynthesis in leaf chloroplasts. Involved in determining starch granule number and size in chloroplasts. The chain is Protein involved in starch initiation 1 from Arabidopsis thaliana (Mouse-ear cress).